A 383-amino-acid chain; its full sequence is MTAHADLSPTLQLAIDLIRRPSVTPVDADCQKQMMQRLGDAGFQLEPMRIEDVDNFWATHGKGDGPVLCFAGHTDVVPTGPVTAWQIDPFNAVIDEHGMLCGRGAADMKGSLASMTVAAERFVADYPDHKGKVAFLITSDEEGPAHHGTKAVVERLAARNERLDWCIVGEPSSTTLVGDVVKNGRRGSLGAKLTVRGVQGHVAYPHLAKNPIHLAAPALAELAAEHWDHGNDFFPPTSFQISNVNSGTGATNVIPGDLVAVFNFRFSTESTVEGLQKRVADILDKHGLDWHIDWALSGLPFLTEPGALLDAVSSSIKDITGRETKASTSGGTSDGRFIATMGTQVVELGPVNATIHQVNERVLAADLDVLTEIYYQTLIKLLA.

Position 73 (H73) interacts with Zn(2+). The active site involves D75. D107 lines the Zn(2+) pocket. E141 acts as the Proton acceptor in catalysis. E142, E170, and H356 together coordinate Zn(2+).

It belongs to the peptidase M20A family. DapE subfamily. In terms of assembly, homodimer. Zn(2+) is required as a cofactor. The cofactor is Co(2+).

It carries out the reaction N-succinyl-(2S,6S)-2,6-diaminopimelate + H2O = (2S,6S)-2,6-diaminopimelate + succinate. It functions in the pathway amino-acid biosynthesis; L-lysine biosynthesis via DAP pathway; LL-2,6-diaminopimelate from (S)-tetrahydrodipicolinate (succinylase route): step 3/3. In terms of biological role, catalyzes the hydrolysis of N-succinyl-L,L-diaminopimelic acid (SDAP), forming succinate and LL-2,6-diaminopimelate (DAP), an intermediate involved in the bacterial biosynthesis of lysine and meso-diaminopimelic acid, an essential component of bacterial cell walls. This is Succinyl-diaminopimelate desuccinylase from Pseudomonas fluorescens (strain Pf0-1).